A 574-amino-acid polypeptide reads, in one-letter code: 2-succinyl-5-enolpyruvyl-6-hydroxy-3-cyclohexene-1-carboxylate synthase (574 aa).

Belongs to the TPP enzyme family. MenD subfamily. As to quaternary structure, homodimer. The cofactor is Mg(2+). Mn(2+) is required as a cofactor. It depends on thiamine diphosphate as a cofactor.

The catalysed reaction is isochorismate + 2-oxoglutarate + H(+) = 5-enolpyruvoyl-6-hydroxy-2-succinyl-cyclohex-3-ene-1-carboxylate + CO2. It participates in quinol/quinone metabolism; 1,4-dihydroxy-2-naphthoate biosynthesis; 1,4-dihydroxy-2-naphthoate from chorismate: step 2/7. It functions in the pathway quinol/quinone metabolism; menaquinone biosynthesis. Catalyzes the thiamine diphosphate-dependent decarboxylation of 2-oxoglutarate and the subsequent addition of the resulting succinic semialdehyde-thiamine pyrophosphate anion to isochorismate to yield 2-succinyl-5-enolpyruvyl-6-hydroxy-3-cyclohexene-1-carboxylate (SEPHCHC). The sequence is that of 2-succinyl-5-enolpyruvyl-6-hydroxy-3-cyclohexene-1-carboxylate synthase from Vibrio atlanticus (strain LGP32) (Vibrio splendidus (strain Mel32)).